Consider the following 273-residue polypeptide: Protein GMH1 (273 aa).

Positions 1-33 (MSYLPTYSNDLPAGPQGQRRRNNGNENDARQGY) are disordered. S2 carries the N-acetylserine modification. Topologically, residues 2–89 (SYLPTYSNDL…QTKNQWARDD (88 aa)) are cytoplasmic. A helical transmembrane segment spans residues 90–110 (PSFFIFQIALISLSSIIWSIY). Over 111–134 (NSGFNNDSDMGALSIIGHFFKSLV) the chain is Lumenal. Residues 135–155 (MMVILDFFIFGFIMATIFYLL) form a helical membrane-spanning segment. Residues 156–175 (LNRSHFKFKSSQNSVVEWAY) are Cytoplasmic-facing. Residues 176–196 (CFDVHCNSFLIILLCLYFIQF) form a helical membrane-spanning segment. Residues 197–216 (LLLPIINLQNWISLLIGNSL) are Lumenal-facing. The helical transmembrane segment at 217 to 237 (YCFAIGHYFILTFYGYNQLPF) threads the bilayer. Topologically, residues 238–242 (LKNLN) are cytoplasmic. Residues 243-263 (FILLPTLGLSIIYLISLFGID) traverse the membrane as a helical segment. The Lumenal portion of the chain corresponds to 264–273 (LSKKLSFYNY).

The protein belongs to the unc-50 family. Interacts with GEA1 and GEA2.

Its subcellular location is the golgi apparatus membrane. It is found in the endoplasmic reticulum membrane. The chain is Protein GMH1 (GMH1) from Saccharomyces cerevisiae (strain ATCC 204508 / S288c) (Baker's yeast).